The chain runs to 223 residues: 26S proteasome non-ATPase regulatory subunit 9 (223 aa).

Residues 103–121 (RDKEKQARDMAEAHKEAMS) are compositionally biased toward basic and acidic residues. A disordered region spans residues 103–141 (RDKEKQARDMAEAHKEAMSRKLGQSESQGPPRAFAKVNS). The region spanning 108–195 (QARDMAEAHK…KPLNVTVIRR (88 aa)) is the PDZ domain. Ser129 is subject to Phosphoserine.

It belongs to the proteasome subunit p27 family. Interacts with PSMC3. Part of a transient complex (modulator) containing PSMD9, PSMC6 and PSMC3 formed during the assembly of the 26S proteasome. Expressed in all tissues tested, highly expressed in liver and kidney.

In terms of biological role, acts as a chaperone during the assembly of the 26S proteasome, specifically of the base subcomplex of the PA700/19S regulatory complex (RC). During the base subcomplex assembly is part of an intermediate PSMD9:PSMC6:PSMC3 module, also known as modulator trimer complex; PSMD9 is released during the further base assembly process. This chain is 26S proteasome non-ATPase regulatory subunit 9 (PSMD9), found in Homo sapiens (Human).